The sequence spans 456 residues: Cytochrome P450 monooxygenase avaH (456 aa).

The helical transmembrane segment at 243–263 threads the bilayer; sequence LMSYFVSVFLVNVALFNAVSI. Residue Cys403 participates in heme binding.

Belongs to the cytochrome P450 family. It depends on heme as a cofactor.

It is found in the membrane. It participates in secondary metabolite biosynthesis. Functionally, cytochrome P450 monooxygenase; part of the cluster that mediates the biosynthesis of a highly modified cyclo-arginine-tryptophan dipeptide (cRW). The first step of the pathway is perfornmed by the arginine-containing cyclodipeptide synthase (RCPDS) avaA that acts as the scaffold-generating enzyme and is responsible for formation of the cyclo-Arg-Trp (cRW) diketopiperazine. AvaB then acts as a multifunctional flavoenzyme that is responsible for generating the cyclo-Arg-formylkynurenine DKP, which can be deformylated by avaC. AvaB then further catalyzes an additional N-oxidation followed by cyclization and dehydration. The next step is an N-acetylation of the guanidine group catalyzed by the arginine N-acetyltransferase avaD. The roles of the additional enzymes identified within the ava cluster still have to be determined. This Aspergillus versicolor protein is Cytochrome P450 monooxygenase avaH.